We begin with the raw amino-acid sequence, 651 residues long: E3 SUMO-protein ligase PIAS1 (651 aa).

Ala2 carries the N-acetylalanine modification. Residues Ala2–Leu200 are required for interaction with MSX1. In terms of domain architecture, SAP spans Val11 to Leu45. Residues Leu19 to Leu23 carry the LXXLL motif motif. Residues Lys40 and Lys46 each participate in a glycyl lysine isopeptide (Lys-Gly) (interchain with G-Cter in SUMO2) cross-link. A Nuclear localization signal motif is present at residues Lys56 to Arg64. One can recognise a PINIT domain in the interval His124–Leu288. Glycyl lysine isopeptide (Lys-Gly) (interchain with G-Cter in SUMO2) cross-links involve residues Lys137 and Lys238. An SP-RING-type zinc finger spans residues Pro320–Ile405. 4 residues coordinate Zn(2+): Cys351, His353, Cys374, and Cys377. The Nuclear localization signal signature appears at Lys368 to Lys380. Lys453 participates in a covalent cross-link: Glycyl lysine isopeptide (Lys-Gly) (interchain with G-Cter in SUMO2). Positions Leu462 to Glu473 are SUMO1-binding. Residues Asp465–Leu511 form a disordered region. Phosphoserine occurs at positions 467, 468, 483, and 485. Over residues Pro482 to Ser491 the composition is skewed to low complexity. Thr487 carries the phosphothreonine modification. A phosphoserine mark is found at Ser488 and Ser491. A Glycyl lysine isopeptide (Lys-Gly) (interchain with G-Cter in SUMO2) cross-link involves residue Lys493. Residues Ser503, Ser510, and Ser522 each carry the phosphoserine modification. 2 consecutive repeat copies span residues Asn520–Leu523 and Asn557–Leu560. The 4 X 4 AA repeats of N-T-S-L stretch occupies residues Asn520–Leu615. The 3; approximate repeat unit spans residues Ser598 to Leu601. The segment at Ser600–Ala630 is disordered. The segment covering Asn605–Leu621 has biased composition (low complexity). A 4; approximate repeat occupies Asn612–Leu615.

The protein belongs to the PIAS family. As to quaternary structure, interacts with NR2C1; the interaction promotes its sumoylation. Interacts with DDX21, CSRP2, AXIN1, JUN, SATB2, PLAG1, TP53 and STAT1 (dimer), following IFNA1-stimulation. Interacts with SP3 (preferentially when SUMO-modified). Interacts with KLF8; the interaction results in SUMO ligation and repression of KLF8 transcriptional activity and of its cell cycle progression into G(1) phase. Interacts with CHUK/IKKA; this interaction induces PIAS1 phosphorylation. Interacts with PTK2/FAK1; the interaction promotes its sumoylation. Interacts with SUMO1, UBE2I, NCOA2 and AR. Interacts with NR2C1; the interaction promotes its sumoylation. Interacts with DDX5. Interacts with MTA1. Interacts with PML (isoform PML-12). Interacts with PRDM1. Interacts (via N-terminus) with MSX1 (via C-terminus); the interaction is required for the localization of both proteins to the nuclear periphery and specific binding of MSX1 to the core enhancer region in target gene promoters. Sumoylated. Expressed in kidney, heart, spleen, brain and cerebellum; weak expression, if any, in liver and lung.

It is found in the nucleus. Its subcellular location is the nucleus speckle. The protein localises to the PML body. It localises to the cytoplasm. The protein resides in the cytoskeleton. It carries out the reaction S-ubiquitinyl-[E2 ubiquitin-conjugating enzyme]-L-cysteine + [acceptor protein]-L-lysine = [E2 ubiquitin-conjugating enzyme]-L-cysteine + N(6)-ubiquitinyl-[acceptor protein]-L-lysine.. Its pathway is protein modification; protein sumoylation. Functions as an E3-type small ubiquitin-like modifier (SUMO) ligase, stabilizing the interaction between UBE2I and the substrate, and as a SUMO-tethering factor. Catalyzes sumoylation of various proteins, such as CEBPB, MRE11, MTA1, PTK2 and PML. Plays a crucial role as a transcriptional coregulation in various cellular pathways, including the STAT pathway, the p53 pathway and the steroid hormone signaling pathway. In vitro, binds A/T-rich DNA. The effects of this transcriptional coregulation, transactivation or silencing, may vary depending upon the biological context. Mediates sumoylation of MRE11, stabilizing MRE11 on chromatin during end resection. Sumoylates PML (at 'Lys-65' and 'Lys-160') and PML-RAR and promotes their ubiquitin-mediated degradation. PIAS1-mediated sumoylation of PML promotes its interaction with CSNK2A1/CK2 which in turn promotes PML phosphorylation and degradation. Enhances the sumoylation of MTA1 and may participate in its paralog-selective sumoylation. Plays a dynamic role in adipogenesis by promoting the SUMOylation and degradation of CEBPB. Mediates the nuclear mobility and localization of MSX1 to the nuclear periphery, whereby MSX1 is brought into the proximity of target myoblast differentiation factor genes. Also required for the binding of MSX1 to the core enhancer region in target gene promoter regions, independent of its sumoylation activity. Capable of binding to the core enhancer region TAAT box in the MYOD1 gene promoter. This chain is E3 SUMO-protein ligase PIAS1 (Pias1), found in Mus musculus (Mouse).